The primary structure comprises 352 residues: GTPase Obg (352 aa).

The 159-residue stretch at 1–159 folds into the Obg domain; sequence MHFLDQAKIF…MYVWLRLKLL (159 aa). The interval 122–142 is disordered; sequence DGGRGNASYKTSTNRAPRQHG. The 169-residue stretch at 160–328 folds into the OBG-type G domain; it reads ADAGLVGLPN…LLDAVLEYLP (169 aa). Residues 166 to 173, 191 to 195, 212 to 215, 280 to 283, and 309 to 311 contribute to the GTP site; these read GLPNAGKS, FTTLR, DIPG, NKID, and SGA. Mg(2+) contacts are provided by Ser173 and Thr193.

This sequence belongs to the TRAFAC class OBG-HflX-like GTPase superfamily. OBG GTPase family. Monomer. It depends on Mg(2+) as a cofactor.

It is found in the cytoplasm. An essential GTPase which binds GTP, GDP and possibly (p)ppGpp with moderate affinity, with high nucleotide exchange rates and a fairly low GTP hydrolysis rate. Plays a role in control of the cell cycle, stress response, ribosome biogenesis and in those bacteria that undergo differentiation, in morphogenesis control. This is GTPase Obg from Novosphingobium aromaticivorans (strain ATCC 700278 / DSM 12444 / CCUG 56034 / CIP 105152 / NBRC 16084 / F199).